The sequence spans 165 residues: Large ribosomal subunit protein uL10 (165 aa).

Belongs to the universal ribosomal protein uL10 family. Part of the ribosomal stalk of the 50S ribosomal subunit. The N-terminus interacts with L11 and the large rRNA to form the base of the stalk. The C-terminus forms an elongated spine to which L12 dimers bind in a sequential fashion forming a multimeric L10(L12)X complex.

Forms part of the ribosomal stalk, playing a central role in the interaction of the ribosome with GTP-bound translation factors. In Burkholderia lata (strain ATCC 17760 / DSM 23089 / LMG 22485 / NCIMB 9086 / R18194 / 383), this protein is Large ribosomal subunit protein uL10.